Consider the following 571-residue polypeptide: Protein dead ringer homolog (571 aa).

Disordered regions lie at residues 45-117 and 190-229; these read QHQQ…EPDK and KRMQQDHNIQQSTNHIPTPSSASSHTSSGSVTSQTNSCNG. Basic and acidic residues predominate over residues 49 to 77; the sequence is RMMEQHKNDDVISNDVRCDDFSDGGERQR. Polar residues predominate over residues 195 to 206; that stretch reads DHNIQQSTNHIP. Positions 207–224 are enriched in low complexity; the sequence is TPSSASSHTSSGSVTSQT. The 93-residue stretch at 249 to 341 folds into the ARID domain; the sequence is DIKRKEFLDD…YLYPFECERE (93 aa). The segment covering 459–471 has biased composition (low complexity); the sequence is AAHHAAQQAAQHQ. A disordered region spans residues 459–528; that stretch reads AAHHAAQQAA…GDRGRHNEMS (70 aa). The region spanning 473–558 is the REKLES domain; it reads SLKKEIDSDY…GVLFAHSPNH (86 aa). Basic and acidic residues-rich tracts occupy residues 487–507 and 518–527; these read PPEKKLSFDDSVRRLTPDNQR and MGDRGRHNEM.

It localises to the nucleus. Its function is as follows. Transcription factor. The chain is Protein dead ringer homolog (Ci-DRIL1/2) from Ciona intestinalis (Transparent sea squirt).